The sequence spans 285 residues: NADPH-dependent 7-cyano-7-deazaguanine reductase (285 aa).

Substrate is bound at residue Val80–Ser82. Residue Ser82–Lys83 participates in NADPH binding. Cys191 serves as the catalytic Thioimide intermediate. The active-site Proton donor is the Asp198. Residue His231–Glu232 participates in substrate binding. Arg260–Gly261 contacts NADPH.

This sequence belongs to the GTP cyclohydrolase I family. QueF type 2 subfamily. Homodimer.

The protein localises to the cytoplasm. The catalysed reaction is 7-aminomethyl-7-carbaguanine + 2 NADP(+) = 7-cyano-7-deazaguanine + 2 NADPH + 3 H(+). The protein operates within tRNA modification; tRNA-queuosine biosynthesis. Catalyzes the NADPH-dependent reduction of 7-cyano-7-deazaguanine (preQ0) to 7-aminomethyl-7-deazaguanine (preQ1). This is NADPH-dependent 7-cyano-7-deazaguanine reductase from Psychrobacter arcticus (strain DSM 17307 / VKM B-2377 / 273-4).